The chain runs to 329 residues: GTP 3',8-cyclase (329 aa).

The Radical SAM core domain maps to 8-234 (AFARKFYYLR…QLRQRSDGPA (227 aa)). GTP is bound at residue Arg17. [4Fe-4S] cluster is bound by residues Cys24 and Cys28. An S-adenosyl-L-methionine-binding site is contributed by Tyr30. [4Fe-4S] cluster is bound at residue Cys31. Position 68 (Arg68) interacts with GTP. Residue Gly72 participates in S-adenosyl-L-methionine binding. Thr99 provides a ligand contact to GTP. Ser123 is an S-adenosyl-L-methionine binding site. Lys160 is a binding site for GTP. Met194 lines the S-adenosyl-L-methionine pocket. 2 residues coordinate [4Fe-4S] cluster: Cys257 and Cys260. Residue 262-264 (RLR) coordinates GTP. Cys274 is a [4Fe-4S] cluster binding site.

It belongs to the radical SAM superfamily. MoaA family. In terms of assembly, monomer and homodimer. Requires [4Fe-4S] cluster as cofactor.

The catalysed reaction is GTP + AH2 + S-adenosyl-L-methionine = (8S)-3',8-cyclo-7,8-dihydroguanosine 5'-triphosphate + 5'-deoxyadenosine + L-methionine + A + H(+). The protein operates within cofactor biosynthesis; molybdopterin biosynthesis. Catalyzes the cyclization of GTP to (8S)-3',8-cyclo-7,8-dihydroguanosine 5'-triphosphate. This chain is GTP 3',8-cyclase, found in Escherichia fergusonii (strain ATCC 35469 / DSM 13698 / CCUG 18766 / IAM 14443 / JCM 21226 / LMG 7866 / NBRC 102419 / NCTC 12128 / CDC 0568-73).